Here is an 83-residue protein sequence, read N- to C-terminus: Large ribosomal subunit protein eL43 (83 aa).

Cysteine 38, cysteine 41, cysteine 56, and cysteine 59 together coordinate Zn(2+). A C4-type zinc finger spans residues 38–59; it reads CKKCGKKAVKRSGTGIWECRHC.

The protein belongs to the eukaryotic ribosomal protein eL43 family. Putative zinc-binding subfamily. In terms of assembly, part of the 50S ribosomal subunit. Zn(2+) serves as cofactor.

Functionally, binds to the 23S rRNA. The protein is Large ribosomal subunit protein eL43 of Archaeoglobus fulgidus (strain ATCC 49558 / DSM 4304 / JCM 9628 / NBRC 100126 / VC-16).